Reading from the N-terminus, the 105-residue chain is Small ribosomal subunit protein bS20 (105 aa).

It belongs to the bacterial ribosomal protein bS20 family.

Binds directly to 16S ribosomal RNA. This chain is Small ribosomal subunit protein bS20, found in Moorella thermoacetica (strain ATCC 39073 / JCM 9320).